The chain runs to 1182 residues: DNA-directed RNA polymerase subunit beta (1182 aa).

Acidic residues predominate over residues 1150-1162 (DEEVEMKDEDDDN). A disordered region spans residues 1150 to 1182 (DEEVEMKDEDDDNIPNATSALEQVVQPTVTEEE). Residues 1171-1182 (EQVVQPTVTEEE) show a composition bias toward low complexity.

The protein belongs to the RNA polymerase beta chain family. In terms of assembly, the RNAP catalytic core consists of 2 alpha, 1 beta, 1 beta' and 1 omega subunit. When a sigma factor is associated with the core the holoenzyme is formed, which can initiate transcription.

It catalyses the reaction RNA(n) + a ribonucleoside 5'-triphosphate = RNA(n+1) + diphosphate. Its function is as follows. DNA-dependent RNA polymerase catalyzes the transcription of DNA into RNA using the four ribonucleoside triphosphates as substrates. The polypeptide is DNA-directed RNA polymerase subunit beta (Exiguobacterium sp. (strain ATCC BAA-1283 / AT1b)).